A 310-amino-acid chain; its full sequence is p-hydroxybenzoic acid efflux pump subunit AaeA (310 aa).

A helical transmembrane segment spans residues 12 to 32 (AITVVLVILAFIAIFNAWVYY).

The protein belongs to the membrane fusion protein (MFP) (TC 8.A.1) family.

It localises to the cell inner membrane. In terms of biological role, forms an efflux pump with AaeB. This Escherichia coli O9:H4 (strain HS) protein is p-hydroxybenzoic acid efflux pump subunit AaeA.